Reading from the N-terminus, the 389-residue chain is PqqA peptide cyclase (389 aa).

One can recognise a Radical SAM core domain in the interval 19–235; it reads VGLPLWLLAE…NEYRVRLEAE (217 aa). [4Fe-4S] cluster is bound by residues C33, C37, and C40.

Belongs to the radical SAM superfamily. PqqE family. As to quaternary structure, interacts with PqqD. The interaction is necessary for activity of PqqE. [4Fe-4S] cluster is required as a cofactor.

It catalyses the reaction [PQQ precursor protein] + S-adenosyl-L-methionine = E-Y cross-linked-[PQQ precursor protein] + 5'-deoxyadenosine + L-methionine + H(+). It functions in the pathway cofactor biosynthesis; pyrroloquinoline quinone biosynthesis. Its function is as follows. Catalyzes the cross-linking of a glutamate residue and a tyrosine residue in the PqqA protein as part of the biosynthesis of pyrroloquinoline quinone (PQQ). This Pseudomonas savastanoi pv. phaseolicola (strain 1448A / Race 6) (Pseudomonas syringae pv. phaseolicola (strain 1448A / Race 6)) protein is PqqA peptide cyclase.